A 337-amino-acid polypeptide reads, in one-letter code: MASDRPRVLSGIQPTAGSFHLGNYLGAVRQWVALQESHDAFYMVVDLHAITVPQDPADLRANTRLAAAQLLAAGLDPERCTLFVQSHVPEHAQLAWIMNCLTGFGEASRMTQFKDKSAKQGADRASVGLFTYPVLQVADILLYQANEVPVGEDQRQHIELTRDLAERFNGRFGETFTVPKPYILKETAKIFDLQDPSIKMSKSASTPKGLINLLDEPKATAKKVKSAVTDTDTVIRYDAEHKPGISNLLTIYSTLTGTGIPELEEKYTGKGYGALKTDLAEVMVDFVTPFRERTQQYLDDPETLDSILAKGAEKARAVAAETLSQAYDRVGFLPAKH.

Residues 13 to 15 (QPT) and 22 to 23 (GN) each bind ATP. Positions 14-23 (PTAGSFHLGN) match the 'HIGH' region motif. D139 contributes to the L-tryptophan binding site. Residues 151 to 153 (GED), I190, and 199 to 203 (KMSKS) each bind ATP. The 'KMSKS' region motif lies at 199–203 (KMSKS).

This sequence belongs to the class-I aminoacyl-tRNA synthetase family. Homodimer.

It is found in the cytoplasm. It catalyses the reaction tRNA(Trp) + L-tryptophan + ATP = L-tryptophyl-tRNA(Trp) + AMP + diphosphate + H(+). Functionally, catalyzes the attachment of tryptophan to tRNA(Trp). This chain is Tryptophan--tRNA ligase 2, found in Streptomyces avermitilis (strain ATCC 31267 / DSM 46492 / JCM 5070 / NBRC 14893 / NCIMB 12804 / NRRL 8165 / MA-4680).